Consider the following 203-residue polypeptide: Probable nicotinate-nucleotide adenylyltransferase (203 aa).

It belongs to the NadD family.

The enzyme catalyses nicotinate beta-D-ribonucleotide + ATP + H(+) = deamido-NAD(+) + diphosphate. It participates in cofactor biosynthesis; NAD(+) biosynthesis; deamido-NAD(+) from nicotinate D-ribonucleotide: step 1/1. Its function is as follows. Catalyzes the reversible adenylation of nicotinate mononucleotide (NaMN) to nicotinic acid adenine dinucleotide (NaAD). The sequence is that of Probable nicotinate-nucleotide adenylyltransferase from Prosthecochloris aestuarii (strain DSM 271 / SK 413).